Here is a 122-residue protein sequence, read N- to C-terminus: MIQNESRLKVADNSGARELLVIRVLGGSKRKTGNIGDIVVCTVKQATPGGVVKKGDVVKAVIVRTKSGARREDGSYIKFDENAGVIINADKSPRGTRIFGPVARELRENDFMKIVSLAPEVL.

The protein belongs to the universal ribosomal protein uL14 family. In terms of assembly, part of the 50S ribosomal subunit. Forms a cluster with proteins L3 and L19. In the 70S ribosome, L14 and L19 interact and together make contacts with the 16S rRNA in bridges B5 and B8.

Functionally, binds to 23S rRNA. Forms part of two intersubunit bridges in the 70S ribosome. The chain is Large ribosomal subunit protein uL14 from Lactobacillus acidophilus (strain ATCC 700396 / NCK56 / N2 / NCFM).